Here is a 387-residue protein sequence, read N- to C-terminus: MKKKCIAMLLAGGQGSRLRSLTTNIAKPAVPFGGKYRIIDFTLSNCTNSGIDTVGVLTQYQPLLLHSYIGIGSAWDLDRRNGGVTVLPPYSVSSGVKWYEGTANAVYQNINYIEQYNPDYVLVLSGDHIYKMDYQHMLDYHIAKQADVTISVIEVPWEEASRFGIMNTNEEMEIVEFAEKPAEPKSNLASMGIYIFNWPLLKQYLQIDNANPHSSHDFGKDVIPMLLREKKRPFAYPFEGYWKDVGTVKSLWEANMDLLDENNELDLFDRSWRIYSVNPNQPPQYISPEAEVSDSLVNEGCVVEGTVERSVLFQGVRIGKGAVVKESVIMPGAAVSEGAYVERAIVTPDSIIPPHSSVCPEDADDVVLVTAEWLKQSNEETARKDEA.

Alpha-D-glucose 1-phosphate is bound by residues Tyr99, Gly164, Glu179 to Lys180, and Ser190.

It belongs to the bacterial/plant glucose-1-phosphate adenylyltransferase family. Homotetramer.

It catalyses the reaction alpha-D-glucose 1-phosphate + ATP + H(+) = ADP-alpha-D-glucose + diphosphate. It functions in the pathway glycan biosynthesis; glycogen biosynthesis. In terms of biological role, involved in the biosynthesis of ADP-glucose, a building block required for the elongation reactions to produce glycogen. Catalyzes the reaction between ATP and alpha-D-glucose 1-phosphate (G1P) to produce pyrophosphate and ADP-Glc. In Geobacillus stearothermophilus (Bacillus stearothermophilus), this protein is Glucose-1-phosphate adenylyltransferase.